Here is a 232-residue protein sequence, read N- to C-terminus: Recombination protein RecR (232 aa).

A C4-type zinc finger spans residues 92–107 (CQVCFHLSAEPVCDIC). The region spanning 115 to 209 (SVICVVSDPR…KVTRIAFGLP (95 aa)) is the Toprim domain.

It belongs to the RecR family.

Its function is as follows. May play a role in DNA repair. It seems to be involved in an RecBC-independent recombinational process of DNA repair. It may act with RecF and RecO. The polypeptide is Recombination protein RecR (Synechocystis sp. (strain ATCC 27184 / PCC 6803 / Kazusa)).